The chain runs to 98 residues: Large ribosomal subunit protein uL23 (98 aa).

It belongs to the universal ribosomal protein uL23 family. Part of the 50S ribosomal subunit. Contacts protein L29, and trigger factor when it is bound to the ribosome.

Its function is as follows. One of the early assembly proteins it binds 23S rRNA. One of the proteins that surrounds the polypeptide exit tunnel on the outside of the ribosome. Forms the main docking site for trigger factor binding to the ribosome. In Ruegeria pomeroyi (strain ATCC 700808 / DSM 15171 / DSS-3) (Silicibacter pomeroyi), this protein is Large ribosomal subunit protein uL23.